Reading from the N-terminus, the 499-residue chain is MAKEKIRVRYAPSPTGHLHIGNARTALFNYLFARHNKGTMVLRIEDSDQKRNVKGGSKSQMENLHWLGIDWDEGPDKGGDYGPYRQSERKDIYQKYIDQLLEEGKAYYSYKTEEELEEQREEQRAMGVAPHYTYEYEGMTADEIKQAQEEAKAKGLKPVVRIHIPEMETYSWDDIVKGHLEFESDTIGGDFVIQKRDGMPTYNFAVVVDDHLMKITHVLRGDDHVSNTPKQLVVYEALGWEPPKFGHMTLIINSETGKKLSKRDESVLQFIEQYRDLGYLPDAMFNFITLLGWSPKGENEIFTKREFIKQFDPARLSKSPAAFDQKKLEWINNQYIKKADRDTLLDLSLNNLQEAGLVDEHPTPEKMEWIRQLVNIYAVQMSYTKQIVDMAKIFFEDAKELSDEEIEEIKNDDGRAVIEEFKKQLDLIPRFTAVQIMGAIQATRKATGIKGRKLFMPVRIATTRSMVGPGIGEAMELLGKDRVVKHIDLTLKQMSDNNL.

The short motif at 12-22 (PSPTGHLHIGN) is the 'HIGH' region element. Positions 259-263 (KLSKR) match the 'KMSKS' region motif. Lysine 262 contacts ATP.

Belongs to the class-I aminoacyl-tRNA synthetase family. Glutamate--tRNA ligase type 1 subfamily. As to quaternary structure, monomer.

The protein localises to the cytoplasm. The catalysed reaction is tRNA(Glu) + L-glutamate + ATP = L-glutamyl-tRNA(Glu) + AMP + diphosphate. Catalyzes the attachment of glutamate to tRNA(Glu) in a two-step reaction: glutamate is first activated by ATP to form Glu-AMP and then transferred to the acceptor end of tRNA(Glu). The polypeptide is Glutamate--tRNA ligase (Lactobacillus acidophilus (strain ATCC 700396 / NCK56 / N2 / NCFM)).